The chain runs to 348 residues: Dihydroorotase (348 aa).

Zn(2+) is bound by residues histidine 17 and histidine 19. Substrate-binding positions include 19–21 and asparagine 45; that span reads HLR. Residues lysine 103, histidine 140, and histidine 178 each contribute to the Zn(2+) site. Lysine 103 bears the N6-carboxylysine mark. Histidine 140 is a binding site for substrate. Leucine 223 lines the substrate pocket. A Zn(2+)-binding site is contributed by aspartate 251. Aspartate 251 is an active-site residue. The substrate site is built by histidine 255 and alanine 267.

Belongs to the metallo-dependent hydrolases superfamily. DHOase family. Class II DHOase subfamily. As to quaternary structure, homodimer. Zn(2+) is required as a cofactor.

It carries out the reaction (S)-dihydroorotate + H2O = N-carbamoyl-L-aspartate + H(+). The protein operates within pyrimidine metabolism; UMP biosynthesis via de novo pathway; (S)-dihydroorotate from bicarbonate: step 3/3. Catalyzes the reversible cyclization of carbamoyl aspartate to dihydroorotate. The protein is Dihydroorotase of Escherichia fergusonii (strain ATCC 35469 / DSM 13698 / CCUG 18766 / IAM 14443 / JCM 21226 / LMG 7866 / NBRC 102419 / NCTC 12128 / CDC 0568-73).